The sequence spans 225 residues: Ribose-5-phosphate isomerase A (225 aa).

Residues 33-36 (TGST), 84-87 (DGAD), and 96-99 (KGGG) each bind substrate. E105 serves as the catalytic Proton acceptor. K123 serves as a coordination point for substrate.

Belongs to the ribose 5-phosphate isomerase family. Homodimer.

The catalysed reaction is aldehydo-D-ribose 5-phosphate = D-ribulose 5-phosphate. Its pathway is carbohydrate degradation; pentose phosphate pathway; D-ribose 5-phosphate from D-ribulose 5-phosphate (non-oxidative stage): step 1/1. Its function is as follows. Catalyzes the reversible conversion of ribose-5-phosphate to ribulose 5-phosphate. This Halobacterium salinarum (strain ATCC 29341 / DSM 671 / R1) protein is Ribose-5-phosphate isomerase A.